The sequence spans 277 residues: Odontogenic ameloblast-associated protein (277 aa).

The N-terminal stretch at 1-15 (MRTLILLGILGATMS) is a signal peptide. Residues 103-124 (TQAGQLDPSQPQTPQQTQRGPK) form a disordered region. A glycan (O-linked (GalNAc...) threonine) is linked at Thr-115. The interval 127-129 (MPS) is interaction with ARHGEF5. Residues Thr-208, Thr-248, and Thr-271 are each glycosylated (O-linked (GalNAc...) threonine).

It belongs to the ODAM family. Interacts (via C-terminus) with ARHGEF5. O-glycosylated.

Its subcellular location is the secreted. It localises to the cytoplasm. The protein resides in the nucleus. In terms of biological role, tooth-associated epithelia protein that probably plays a role in odontogenesis, the complex process that results in the initiation and generation of the tooth. May be incorporated in the enamel matrix at the end of mineralization process. Involved in the induction of RHOA activity via interaction with ARHGEF and expression of downstream factors such as ROCK. Plays a role in attachment of the junctional epithelium to the tooth surface. The chain is Odontogenic ameloblast-associated protein (ODAM) from Bos taurus (Bovine).